A 272-amino-acid polypeptide reads, in one-letter code: Orotidine 5'-phosphate decarboxylase (272 aa).

Lysine 95 serves as the catalytic Proton donor.

The protein belongs to the OMP decarboxylase family. Type 2 subfamily.

It carries out the reaction orotidine 5'-phosphate + H(+) = UMP + CO2. It functions in the pathway pyrimidine metabolism; UMP biosynthesis via de novo pathway; UMP from orotate: step 2/2. This Bordetella avium (strain 197N) protein is Orotidine 5'-phosphate decarboxylase.